A 479-amino-acid polypeptide reads, in one-letter code: Pyruvate kinase (479 aa).

A substrate-binding site is contributed by arginine 36. Asparagine 38, serine 40, and aspartate 70 together coordinate K(+). 38 to 41 is a binding site for ATP; it reads NFSH. Positions 77 and 160 each coordinate ATP. Position 225 (glutamate 225) interacts with Mg(2+). Residues glycine 251, aspartate 252, and threonine 284 each contribute to the substrate site. Residue aspartate 252 participates in Mg(2+) binding.

The protein belongs to the pyruvate kinase family. As to quaternary structure, homotetramer. The cofactor is Mg(2+). Requires K(+) as cofactor.

It catalyses the reaction pyruvate + ATP = phosphoenolpyruvate + ADP + H(+). It participates in carbohydrate degradation; glycolysis; pyruvate from D-glyceraldehyde 3-phosphate: step 5/5. Allosterically activated by AMP and by several sugar phosphates. Belongs to type II PK. This Buchnera aphidicola subsp. Baizongia pistaciae (strain Bp) protein is Pyruvate kinase (pykA).